Here is a 103-residue protein sequence, read N- to C-terminus: Large ribosomal subunit protein uL24 (103 aa).

Belongs to the universal ribosomal protein uL24 family. In terms of assembly, part of the 50S ribosomal subunit.

Functionally, one of two assembly initiator proteins, it binds directly to the 5'-end of the 23S rRNA, where it nucleates assembly of the 50S subunit. In terms of biological role, one of the proteins that surrounds the polypeptide exit tunnel on the outside of the subunit. In Dehalococcoides mccartyi (strain ATCC BAA-2100 / JCM 16839 / KCTC 5957 / BAV1), this protein is Large ribosomal subunit protein uL24.